A 363-amino-acid chain; its full sequence is 4-hydroxy-2-oxovalerate aldolase 1 (363 aa).

The 253-residue stretch at Val13–Ala265 folds into the Pyruvate carboxyltransferase domain. Arg21–Asp22 lines the substrate pocket. Asp22 contacts Mn(2+). The Proton acceptor role is filled by His25. Substrate-binding residues include Ser175 and His204. Mn(2+)-binding residues include His204 and His206. Residue Tyr295 participates in substrate binding.

This sequence belongs to the 4-hydroxy-2-oxovalerate aldolase family.

The catalysed reaction is (S)-4-hydroxy-2-oxopentanoate = acetaldehyde + pyruvate. This is 4-hydroxy-2-oxovalerate aldolase 1 from Mycobacterium sp. (strain JLS).